The sequence spans 276 residues: Formamidopyrimidine-DNA glycosylase (276 aa).

The active-site Schiff-base intermediate with DNA is Pro-2. Glu-3 acts as the Proton donor in catalysis. The active-site Proton donor; for beta-elimination activity is Lys-60. Positions 113 and 152 each coordinate DNA. The FPG-type zinc finger occupies 241-275 (NVFRKTGHPCPRCGHLIEKLIVAQRSTHICPICQK). Arg-265 functions as the Proton donor; for delta-elimination activity in the catalytic mechanism.

Belongs to the FPG family. In terms of assembly, monomer. The cofactor is Zn(2+).

It catalyses the reaction Hydrolysis of DNA containing ring-opened 7-methylguanine residues, releasing 2,6-diamino-4-hydroxy-5-(N-methyl)formamidopyrimidine.. It carries out the reaction 2'-deoxyribonucleotide-(2'-deoxyribose 5'-phosphate)-2'-deoxyribonucleotide-DNA = a 3'-end 2'-deoxyribonucleotide-(2,3-dehydro-2,3-deoxyribose 5'-phosphate)-DNA + a 5'-end 5'-phospho-2'-deoxyribonucleoside-DNA + H(+). In terms of biological role, involved in base excision repair of DNA damaged by oxidation or by mutagenic agents. Acts as a DNA glycosylase that recognizes and removes damaged bases. Has a preference for oxidized purines, such as 7,8-dihydro-8-oxoguanine (8-oxoG). Has AP (apurinic/apyrimidinic) lyase activity and introduces nicks in the DNA strand. Cleaves the DNA backbone by beta-delta elimination to generate a single-strand break at the site of the removed base with both 3'- and 5'-phosphates. This Protochlamydia amoebophila (strain UWE25) protein is Formamidopyrimidine-DNA glycosylase.